Consider the following 603-residue polypeptide: NADH-ubiquinone oxidoreductase chain 5 (603 aa).

A run of 16 helical transmembrane segments spans residues Tyr4–Ile24, Ser38–Asp58, Met87–Tyr107, Leu122–Ile142, Trp144–Ala160, Ala171–Leu191, Thr211–Leu233, Thr241–Ile261, Leu272–Ala292, Ile301–Asn320, Ala325–Ile347, Ser370–Tyr390, Trp407–Leu429, Leu457–Thr477, Ile482–Leu502, and Met583–Met603.

This sequence belongs to the complex I subunit 5 family. As to quaternary structure, core subunit of respiratory chain NADH dehydrogenase (Complex I) which is composed of 45 different subunits.

The protein resides in the mitochondrion inner membrane. It carries out the reaction a ubiquinone + NADH + 5 H(+)(in) = a ubiquinol + NAD(+) + 4 H(+)(out). Its function is as follows. Core subunit of the mitochondrial membrane respiratory chain NADH dehydrogenase (Complex I) which catalyzes electron transfer from NADH through the respiratory chain, using ubiquinone as an electron acceptor. Essential for the catalytic activity and assembly of complex I. In Pan paniscus (Pygmy chimpanzee), this protein is NADH-ubiquinone oxidoreductase chain 5 (MT-ND5).